A 244-amino-acid chain; its full sequence is Isoprenyl transferase (244 aa).

D23 is a catalytic residue. D23 is a Mg(2+) binding site. Residues 24–27 (GNGR), W28, R36, H40, and 68–70 (STE) each bind substrate. N71 serves as the catalytic Proton acceptor. Residues W72, R74, R191, and 197–199 (RMS) each bind substrate. E210 is a Mg(2+) binding site.

Belongs to the UPP synthase family. As to quaternary structure, homodimer. Mg(2+) serves as cofactor.

Its function is as follows. Catalyzes the condensation of isopentenyl diphosphate (IPP) with allylic pyrophosphates generating different type of terpenoids. This chain is Isoprenyl transferase, found in Lactococcus lactis subsp. lactis (strain IL1403) (Streptococcus lactis).